The following is a 296-amino-acid chain: Transcription factor bHLH99 (296 aa).

The 52-residue stretch at 99–150 (NQRMNHIAVERNRRKQMNHFLSILKSMMPLSYSQPNDQASIIEGTISYLKKL) folds into the bHLH domain.

Homodimer. As to expression, expressed constitutively in roots, stems, and flowers.

Its subcellular location is the nucleus. The protein is Transcription factor bHLH99 (BHLH99) of Arabidopsis thaliana (Mouse-ear cress).